Reading from the N-terminus, the 133-residue chain is Large ribosomal subunit protein bL19 (133 aa).

It belongs to the bacterial ribosomal protein bL19 family.

Functionally, this protein is located at the 30S-50S ribosomal subunit interface and may play a role in the structure and function of the aminoacyl-tRNA binding site. The chain is Large ribosomal subunit protein bL19 from Sulfurihydrogenibium sp. (strain YO3AOP1).